Reading from the N-terminus, the 340-residue chain is Tryptophan--tRNA ligase (340 aa).

Residues 11–13 (RPT) and 19–20 (GH) each bind ATP. The 'HIGH' region signature appears at 12–20 (PTGKLHLGH). Residue D140 participates in L-tryptophan binding. Residues 152 to 154 (GND), L194, and 202 to 206 (KMSKS) contribute to the ATP site. The short motif at 202 to 206 (KMSKS) is the 'KMSKS' region element.

It belongs to the class-I aminoacyl-tRNA synthetase family. In terms of assembly, homodimer.

The protein resides in the cytoplasm. The enzyme catalyses tRNA(Trp) + L-tryptophan + ATP = L-tryptophyl-tRNA(Trp) + AMP + diphosphate + H(+). Catalyzes the attachment of tryptophan to tRNA(Trp). The protein is Tryptophan--tRNA ligase of Streptococcus pyogenes serotype M1.